An 86-amino-acid chain; its full sequence is Cell division topological specificity factor (86 aa).

The protein belongs to the MinE family.

Functionally, prevents the cell division inhibition by proteins MinC and MinD at internal division sites while permitting inhibition at polar sites. This ensures cell division at the proper site by restricting the formation of a division septum at the midpoint of the long axis of the cell. The chain is Cell division topological specificity factor from Stenotrophomonas maltophilia (strain R551-3).